Here is a 262-residue protein sequence, read N- to C-terminus: Iso-A82775C biosynthesis cluster protein B (262 aa).

In terms of biological role, part of the gene cluster that mediates the biosynthesis of iso-A82775C, a enylepoxycyclohexane and biosynthetic precursor of the chloropestolide anticancer natural products. Within the cluster, the prenyltransferase iacE prenylates siccayne to generate pestalodiol E, using dimethylallyl diphosphate (DMAPP) as cosubstrate. The probable oxidoreductase iacF is then involved in the epoxidation of pestalodiol F to pestalodiol F, which is further converted to pestalofone A by the short-chain dehydrogenase/reductase iacG. Iso-A82775C is subsequently generated from pestalofone A by the short-chain dehydrogenase/reductase iacC. Iso-A82775C is further condensed with maldoxin via a Diels-Alder reaction to produce the anticancer natural products chloropestolides A to E. This is Iso-A82775C biosynthesis cluster protein B from Pestalotiopsis fici (strain W106-1 / CGMCC3.15140).